The chain runs to 309 residues: Metal ABC transporter substrate-binding lipoprotein FimA (309 aa).

The N-terminal stretch at 1 to 20 (MKKIASVLALFVALLFGLLA) is a signal peptide. A lipid anchor (N-palmitoyl cysteine) is attached at cysteine 21. The S-diacylglycerol cysteine moiety is linked to residue cysteine 21. Histidine 67, histidine 139, glutamate 205, and aspartate 280 together coordinate a divalent metal cation.

It belongs to the bacterial solute-binding protein 9 family. Lipoprotein receptor antigen (Lrai) subfamily.

Its subcellular location is the cell membrane. Part of an ATP-binding cassette (ABC) transport system involved in metal import. Binds a metal with high affinity and specificity and delivers it to the membrane permease for translocation into the cytoplasm. Also acts as an adhesin which is involved on adherence to extracellular matrix. It is an important factor in pathogenesis and infection. May contribute to the formation and accumulation of dental plaque. In Streptococcus parasanguinis, this protein is Metal ABC transporter substrate-binding lipoprotein FimA (fimA).